The following is a 204-amino-acid chain: Large ribosomal subunit protein uL4 (204 aa).

Polar residues predominate over residues 42–55; the sequence is GSRQGSKAQKNRSA. The tract at residues 42 to 85 is disordered; that stretch reads GSRQGSKAQKNRSAVSGGGKRPWAQKGTGRARAGTTRGPIWRSG. The span at 68 to 79 shows a compositional bias: low complexity; that stretch reads GTGRARAGTTRG.

The protein belongs to the universal ribosomal protein uL4 family. As to quaternary structure, part of the 50S ribosomal subunit.

Functionally, one of the primary rRNA binding proteins, this protein initially binds near the 5'-end of the 23S rRNA. It is important during the early stages of 50S assembly. It makes multiple contacts with different domains of the 23S rRNA in the assembled 50S subunit and ribosome. In terms of biological role, forms part of the polypeptide exit tunnel. This is Large ribosomal subunit protein uL4 from Vesicomyosocius okutanii subsp. Calyptogena okutanii (strain HA).